The primary structure comprises 621 residues: DNA mismatch repair protein MutL (621 aa).

It belongs to the DNA mismatch repair MutL/HexB family.

In terms of biological role, this protein is involved in the repair of mismatches in DNA. It is required for dam-dependent methyl-directed DNA mismatch repair. May act as a 'molecular matchmaker', a protein that promotes the formation of a stable complex between two or more DNA-binding proteins in an ATP-dependent manner without itself being part of a final effector complex. The sequence is that of DNA mismatch repair protein MutL from Petrotoga mobilis (strain DSM 10674 / SJ95).